The following is a 143-amino-acid chain: uncharacterized protein (143 aa).

The N-terminal stretch at 1–16 is a signal peptide; it reads MSRNRLFLVAGSLAVA. A helical transmembrane segment spans residues 114–134; that stretch reads GAYVFLGPGFTPGSPSGGSGG.

The protein resides in the membrane. This is an uncharacterized protein from Mycobacterium tuberculosis (strain CDC 1551 / Oshkosh).